Consider the following 592-residue polypeptide: Transmembrane 9 superfamily member 2 (592 aa).

An N-terminal signal peptide occupies residues 1–24; that stretch reads MRTPTTILLLVGAILFSGAGYVRS. Residues 25–229 are Lumenal-facing; that stretch reads DASDHRYKEG…SLPHHLEIHW (205 aa). A helical transmembrane segment spans residues 230 to 250; it reads FSIINSCVTVLLLTGFLATIL. Residues 251 to 302 lie on the Cytoplasmic side of the membrane; the sequence is MRVLKNDFMKYAQDEEAADDQEETGWKYIHGDVFRFPTHNSLFAASLGSGTQ. A helical transmembrane segment spans residues 303–323; the sequence is LFTLTIFIFMLALVGVFYPYN. A topological domain (lumenal) is located at residue Arg-324. A helical transmembrane segment spans residues 325–345; that stretch reads GALFTALVVIYALTSGIAGYT. The Cytoplasmic segment spans residues 346 to 362; that stretch reads SASFYCQLEGKSWVRNL. A helical transmembrane segment spans residues 363–383; the sequence is LLTGCLFCGPLFLTFCFLNTV. Topologically, residues 384-397 are lumenal; it reads AITYTATAALPFGT. The helical transmembrane segment at 398 to 418 threads the bilayer; the sequence is IVVIVLIWTLVTSPLLVLGGI. At 419–452 the chain is on the cytoplasmic side; that stretch reads AGKNSKAEFQAPCRTTKYPREIPPLPWYRSAIPQ. The chain crosses the membrane as a helical span at residues 453–473; that stretch reads MAMAGFLPFSAIYIELYYIFA. The Lumenal portion of the chain corresponds to 474-485; it reads SVWGHRIYTIYS. Residues 486 to 506 traverse the membrane as a helical segment; that stretch reads ILFIVFIILIIVTAFITVALT. The Cytoplasmic portion of the chain corresponds to 507–521; that stretch reads YFQLAAEDHQWWWRS. The helical transmembrane segment at 522-542 threads the bilayer; the sequence is FLCGGSTGLFIYAYCLYYYYA. At 543-553 the chain is on the lumenal side; sequence RSDMSGFMQTS. The helical transmembrane segment at 554–574 threads the bilayer; sequence FFFGYMACICYGFFLMLGTVG. The Cytoplasmic portion of the chain corresponds to 575–592; sequence FRAALLFVRHIYRSIKCE. The Endoplasmic reticulum export signal motif lies at 581 to 586; sequence FVRHIY. A Golgi retention signal motif is present at residues 590–592; that stretch reads KCE.

Belongs to the nonaspanin (TM9SF) (TC 9.A.2) family.

The protein resides in the endosome membrane. It is found in the golgi apparatus membrane. The protein is Transmembrane 9 superfamily member 2 of Arabidopsis thaliana (Mouse-ear cress).